Consider the following 180-residue polypeptide: Probable phospholipid hydroperoxide glutathione peroxidase (180 aa).

Residue Cys54 is part of the active site.

The protein belongs to the glutathione peroxidase family.

It localises to the cytoplasm. It carries out the reaction a hydroperoxy polyunsaturated fatty acid + 2 glutathione = a hydroxy polyunsaturated fatty acid + glutathione disulfide + H2O. Functionally, protects cells and enzymes from oxidative damage, by catalyzing the reduction of hydrogen peroxide, lipid peroxides and organic hydroperoxide, by glutathione. This is Probable phospholipid hydroperoxide glutathione peroxidase (GPXHA-2) from Helianthus annuus (Common sunflower).